Consider the following 474-residue polypeptide: Nucleobindin-1 (474 aa).

Positions 1 to 24 (MPPSGPRAALFLLPSLLLLRAVLA) are cleaved as a signal peptide. Phosphoserine is present on S83. T145 carries the phosphothreonine modification. Residues 147–215 (EARDLELLIQ…QQRRHREHPK (69 aa)) are a coiled coil. A compositionally biased stretch (basic and acidic residues) spans 190 to 207 (SLGEEQRKEAERKLEEQQ). The interval 190 to 218 (SLGEEQRKEAERKLEEQQRRHREHPKVNV) is disordered. The segment at 225 to 318 (LKEVWEELDG…VTLEEFLAST (94 aa)) is binds to GNAI2 and GNAI3. 2 EF-hand domains span residues 237 to 272 (PNRF…ELEK) and 289 to 324 (ERLR…KEFG). Ca(2+) is bound by residues D250, N252, D254, E261, D302, N304, D306, and E313. Positions 300-330 (NVDTNQDRLVTLEEFLASTQRKEFGDTGEGW) match the GBA motif. Residues 355–422 (AYTEEELRRF…RKQQQQSHNN (68 aa)) are a coiled coil. Residues 382–474 (LSQETEALGR…EPPQLDSQHL (93 aa)) form a disordered region. Position 383 is a phosphoserine (S383). Positions 448-460 (DQKDVDASEKKVP) are enriched in basic and acidic residues. A Phosphoserine modification is found at S471.

The protein belongs to the nucleobindin family. Interacts (via GBA motif) with guanine nucleotide-binding protein G(i) alpha subunits GNAI1, GNAI2 and GNAI3 with higher affinity for GNAI1 and GNAI3 than for GNAI2. Preferentially interacts with inactive rather than active GNAI3. Interaction with GNAI3 is inhibited when NUCB1 binds calcium, probably due to a conformational change which renders the GBA motif inaccessible. Expressed in bone where it is detected in the soft tissue in the center of the osteon and in the osteocyte lacuna (at protein level).

The protein resides in the golgi apparatus. Its subcellular location is the cis-Golgi network membrane. It is found in the cytoplasm. It localises to the secreted. Its function is as follows. Major calcium-binding protein of the Golgi which may have a role in calcium homeostasis. Acts as a non-receptor guanine nucleotide exchange factor which binds to and activates alpha subunits of guanine nucleotide-binding proteins (G proteins). The polypeptide is Nucleobindin-1 (NUCB1) (Bos taurus (Bovine)).